Here is a 337-residue protein sequence, read N- to C-terminus: CMP-N-acetylneuraminate-beta-galactosamide-alpha-2,3-sialyltransferase 1 (337 aa).

At 1-4 (MRRK) the chain is on the cytoplasmic side. A helical; Signal-anchor for type II membrane protein membrane pass occupies residues 5 to 25 (TLKYLTFFLLFIFLTSFVLNY). Residues 26–337 (SNTGVPSAWF…INKIRIFKGR (312 aa)) are Lumenal-facing. Intrachain disulfides connect cysteine 56–cysteine 61, cysteine 58–cysteine 136, and cysteine 139–cysteine 278. Residue asparagine 76 is glycosylated (N-linked (GlcNAc...) asparagine). Glutamine 102 serves as a coordination point for substrate. Residue asparagine 109 is glycosylated (N-linked (GlcNAc...) asparagine). Substrate is bound by residues asparagine 144, asparagine 167, tyrosine 227, tyrosine 263, glycine 267, glycine 287, histidine 296, and histidine 313. N-linked (GlcNAc...) asparagine glycosylation is present at asparagine 320.

It belongs to the glycosyltransferase 29 family. In terms of processing, the soluble form derives from the membrane form by proteolytic processing. Highly expressed in submaxillary gland and to a much lesser extent in liver, lung, kidney, heart and brain.

Its subcellular location is the golgi apparatus. It is found in the golgi stack membrane. The protein resides in the trans-Golgi network membrane. It localises to the secreted. It carries out the reaction a beta-D-galactosyl-(1-&gt;3)-N-acetyl-alpha-D-galactosaminyl derivative + CMP-N-acetyl-beta-neuraminate = an N-acetyl-alpha-neuraminyl-(2-&gt;3)-beta-D-galactosyl-(1-&gt;3)-N-acetyl-alpha-D-galactosaminyl derivative + CMP + H(+). The enzyme catalyses a ganglioside GM1 (d18:1(4E)) + CMP-N-acetyl-beta-neuraminate = a ganglioside GD1a (d18:1(4E)) + CMP + H(+). The catalysed reaction is ganglioside GM1 (d18:1(4E)/18:0) + CMP-N-acetyl-beta-neuraminate = ganglioside GD1a (18:1(4E)/18:0) + CMP + H(+). It catalyses the reaction a ganglioside GA1 + CMP-N-acetyl-beta-neuraminate = a ganglioside GM1b + CMP + H(+). It carries out the reaction a ganglioside GA1 (d18:1(4E)) + CMP-N-acetyl-beta-neuraminate = a ganglioside GM1b (d18:1(4E)) + CMP + H(+). The enzyme catalyses a ganglioside GD1b + CMP-N-acetyl-beta-neuraminate = a ganglioside GT1b + CMP + H(+). The catalysed reaction is a 3-O-[beta-D-galactosyl-(1-&gt;3)-N-acetyl-alpha-D-galactosaminyl]-L-threonyl-[protein] + CMP-N-acetyl-beta-neuraminate = a 3-O-[N-acetyl-alpha-neuraminyl-(2-&gt;3)-beta-D-galactosyl-(1-&gt;3)-N-acetyl-alpha-D-galactosaminyl]-L-threonyl-[protein] + CMP + H(+). It catalyses the reaction a 3-O-[beta-D-galactosyl-(1-&gt;3)-N-acetyl-alpha-D-galactosaminyl]-L-seryl-[protein] + CMP-N-acetyl-beta-neuraminate = 3-O-[N-acetyl-alpha-neuraminyl-(2-&gt;3)-beta-D-galactosyl-(1-&gt;3)-N-acetyl-alpha-D-galactosaminyl]-L-seryl-[protein] + CMP + H(+). The protein operates within protein modification; protein glycosylation. It functions in the pathway glycolipid biosynthesis. A beta-galactoside alpha2-&gt;3 sialyltransferase involved in terminal sialylation of glycoproteins and glycolipids. Catalyzes the transfer of sialic acid (N-acetyl-neuraminic acid; Neu5Ac) from the nucleotide sugar donor CMP-Neu5Ac onto acceptor Galbeta-(1-&gt;3)-GalNAc-terminated glycoconjugates through an alpha2-3 linkage. Adds sialic acid to the core 1 O-glycan, Galbeta-(1-&gt;3)-GalNAc-O-Ser/Thr, which is a major structure of mucin-type O-glycans. As part of a homeostatic mechanism that regulates CD8-positive T cell numbers, sialylates core 1 O-glycans of T cell glycoproteins, SPN/CD43 and PTPRC/CD45. Prevents premature apoptosis of thymic CD8-positive T cells prior to peripheral emigration, whereas in the secondary lymphoid organs controls the survival of CD8-positive memory T cells generated following a successful immune response. Transfers sialic acid to asialofetuin, presumably onto Galbeta-(1-&gt;3)-GalNAc-O-Ser. Sialylates GM1a, GA1 and GD1b gangliosides to form GD1a, GM1b and GT1b, respectively. The polypeptide is CMP-N-acetylneuraminate-beta-galactosamide-alpha-2,3-sialyltransferase 1 (St3gal1) (Mus musculus (Mouse)).